The following is a 227-amino-acid chain: uncharacterized protein (227 aa).

A run of 5 helical transmembrane segments spans residues 27 to 47 (AVLPGILIIVFIETGLLFPLL), 63 to 83 (PAPPVTIGVLAPCVALVAVLG), 126 to 146 (TIILARFVPIARTFVPVIAGV), 153 to 173 (VFLGFDIVGGVAWGAGVTLAG), and 186 to 206 (FQLIILAIVFVSLLPALVSAA).

The protein belongs to the DedA family.

It localises to the cell membrane. This is an uncharacterized protein from Mycobacterium tuberculosis (strain CDC 1551 / Oshkosh).